The sequence spans 811 residues: Serine/threonine-protein kinase prpf4B (811 aa).

Disordered regions lie at residues 1-257 (MVIE…TNEP), 288-341 (EKYN…NQIE), 353-379 (KDQNSENSSAFNDNNNDESCSSEEDLK), and 408-452 (VSIK…TNGG). The segment covering 46–71 (SSPASRETSSSKLMSPSKNQSSSSSR) has biased composition (low complexity). The span at 81-202 (RRKDERYSSS…DNMDSRDNKN (122 aa)) shows a compositional bias: basic and acidic residues. The segment covering 203–215 (GSRQSINNNTLSY) has biased composition (polar residues). The span at 217 to 240 (KQADRKDEVRVKDNISVNDDKTNH) shows a compositional bias: basic and acidic residues. 2 stretches are compositionally biased toward polar residues: residues 241-257 (GENLTNESITATSTNEP) and 293-302 (EQPQPITSSL). Positions 310 to 327 (SNTNTNSNSTPVATTTTS) are enriched in low complexity. One can recognise a Protein kinase domain in the interval 490-808 (YQIFSPIGSG…PFEALNHEFL (319 aa)). ATP contacts are provided by residues 496 to 504 (IGSGVFSTV) and Lys-519. The active-site Proton acceptor is the Asp-619.

Belongs to the protein kinase superfamily. CMGC Ser/Thr protein kinase family. In terms of processing, phosphorylated. Autophosphorylated; phosphorylation inhibits interaction with its targets.

The protein resides in the nucleus. It localises to the chromosome. Its subcellular location is the centromere. It is found in the kinetochore. The catalysed reaction is L-seryl-[protein] + ATP = O-phospho-L-seryl-[protein] + ADP + H(+). It carries out the reaction L-threonyl-[protein] + ATP = O-phospho-L-threonyl-[protein] + ADP + H(+). Serine/threonine kinase involved in spliceosomal assembly as well as mitosis and signaling regulation. The protein is Serine/threonine-protein kinase prpf4B (prp4k) of Dictyostelium discoideum (Social amoeba).